The chain runs to 254 residues: MVNQKIQLICETESAVQFTALCQQKGLIHDPNSYLALVQTKVEGQVRLELRKLDEPKLGAVYVDFVTGTMAHRRKFGGGRAEAVAKAVGIKGNYLPTVIDATAGLGRDAFVLAALGCKVRLVERHPVVHLLLQDGLKRAYADAEIGTMMQANMQLLDIAHIQELNSSEEGADVVYLDPMYPHKQKSALVKKEMRIFQHLIGADLDADMLLEPALLLAQKRAVVKRPDYADFLAKKTPHFSHQTKNHRFDIYLKT.

S-adenosyl-L-methionine contacts are provided by residues 107–108 (RD), 123–124 (ER), and Asp177.

Belongs to the methyltransferase superfamily. RsmJ family.

The protein resides in the cytoplasm. The catalysed reaction is guanosine(1516) in 16S rRNA + S-adenosyl-L-methionine = N(2)-methylguanosine(1516) in 16S rRNA + S-adenosyl-L-homocysteine + H(+). Its function is as follows. Specifically methylates the guanosine in position 1516 of 16S rRNA. The chain is Ribosomal RNA small subunit methyltransferase J from Histophilus somni (strain 2336) (Haemophilus somnus).